Reading from the N-terminus, the 283-residue chain is Orotidine 5'-phosphate decarboxylase (283 aa).

Substrate is bound by residues Asp40, 62–64 (KTH), 93–102 (DRKFADIGNT), Tyr220, and Arg239. The active-site Proton donor is the Lys95.

The protein belongs to the OMP decarboxylase family.

The catalysed reaction is orotidine 5'-phosphate + H(+) = UMP + CO2. Its pathway is pyrimidine metabolism; UMP biosynthesis via de novo pathway; UMP from orotate: step 2/2. This is Orotidine 5'-phosphate decarboxylase (PYR6) from Mycosarcoma maydis (Corn smut fungus).